The primary structure comprises 59 residues: Bacteriocin curvacin-A (59 aa).

A propeptide spanning residues 1 to 18 is cleaved from the precursor; sequence MNNVKELSMTELQTITGG. A disulfide bond links Cys28 and Cys33.

This sequence belongs to the bacteriocin class IIA/YGNGV family.

It is found in the secreted. In terms of biological role, bactericidal activity; inhibits closely related Lactobacilli, Listeria monocytogenes and ivanovvi, Enterococcus faecalis, Carnobacterium sp and Brocothrix thermosphacta. In Latilactobacillus curvatus (Lactobacillus curvatus), this protein is Bacteriocin curvacin-A (curA).